Reading from the N-terminus, the 433-residue chain is GTPase Der (433 aa).

EngA-type G domains are found at residues 3–167 and 174–349; these read NIVA…QDTI and PKIA…TNKT. GTP contacts are provided by residues 9-16, 56-60, 119-122, 180-187, 227-231, and 292-295; these read GRPNVGKS, DTGGY, NKAD, DTAGI, and NKWD. Positions 350–433 constitute a KH-like domain; that stretch reads QKISTAALNQ…VPVQLVFRKK (84 aa).

This sequence belongs to the TRAFAC class TrmE-Era-EngA-EngB-Septin-like GTPase superfamily. EngA (Der) GTPase family. In terms of assembly, associates with the 50S ribosomal subunit.

Its function is as follows. GTPase that plays an essential role in the late steps of ribosome biogenesis. The chain is GTPase Der from Amoebophilus asiaticus (strain 5a2).